The primary structure comprises 94 residues: Histone-like DNA-binding protein (94 aa).

It belongs to the bacterial histone-like protein family.

This is Histone-like DNA-binding protein from Rickettsia bellii (strain RML369-C).